Here is a 419-residue protein sequence, read N- to C-terminus: Creatine kinase S-type, mitochondrial (419 aa).

The N-terminal 39 residues, 1 to 39 (MASTFSKLLTGRNASLLFATLGTGALTTGYLLNKQNVCA), are a transit peptide targeting the mitochondrion. The interval 40 to 64 (AAREQHKLFPPSADYPDLRKHNNCM) is cardiolipin-binding. The 87-residue stretch at 46-132 (KLFPPSADYP…FDPVIKLRHN (87 aa)) folds into the Phosphagen kinase N-terminal domain. The Phosphagen kinase C-terminal domain occupies 159–401 (YVLSSRVRTG…NYLVDCEKKL (243 aa)). ATP contacts are provided by residues 162–166 (SSRVR) and His225. Tyr255 carries the post-translational modification Phosphotyrosine. ATP contacts are provided by residues Arg270, Arg326, 354 to 359 (RGTGGV), and Asp369. Residue Thr356 is modified to Phosphothreonine.

The protein belongs to the ATP:guanido phosphotransferase family. Exists as an octamer composed of four CKMT2 homodimers.

It localises to the mitochondrion inner membrane. The catalysed reaction is creatine + ATP = N-phosphocreatine + ADP + H(+). Its function is as follows. Reversibly catalyzes the transfer of phosphate between ATP and various phosphogens (e.g. creatine phosphate). Creatine kinase isoenzymes play a central role in energy transduction in tissues with large, fluctuating energy demands, such as skeletal muscle, heart, brain and spermatozoa. This is Creatine kinase S-type, mitochondrial (CKMT2) from Bos taurus (Bovine).